The following is a 231-amino-acid chain: MQKLIVFFTTIAAAQAFLLPSGGGGGCGCAPPPPPPPCGCGAPALPPLQLPRFELPRLSLPSLGGGCGGPAPCAAAPIAAPAGGYATAPAAPVGGYATGPAFGGAAPIGGAYQAAPAFVGAAPVGGAYQSGPAFGGAAPAGGAYQSGPAFGGAAPAGGAYQSGPAFGGAAPAVGGAYQAGQAAVESAPLGGAAPAGGYQASAPAAVEAAPAAGGYQAAAPAGGAYAGHKKN.

A signal peptide spans 1–16; sequence MQKLIVFFTTIAAAQA. A run of 12 repeats spans residues 75-78, 79-82, 90-93, 105-108, 114-117, 121-124, 137-140, 153-156, 169-172, 192-195, 208-211, and 218-221. The 12 X 4 AA repeats of A-A-P-[AVI] stretch occupies residues 75-221; it reads AAPIAAPAGG…AGGYQAAAPA (147 aa).

Post-translationally, tyrosine residues can be cross-linked in vitro, leading to the formation of insoluble high molecular-weight complexes.

The protein resides in the secreted. Functionally, component of the insoluble part of the cuticles. This chain is Cuticlin 2, found in Caenorhabditis elegans.